Here is a 125-residue protein sequence, read N- to C-terminus: Small ribosomal subunit protein bS6 (125 aa).

Belongs to the bacterial ribosomal protein bS6 family.

Functionally, binds together with bS18 to 16S ribosomal RNA. The polypeptide is Small ribosomal subunit protein bS6 (Campylobacter jejuni (strain RM1221)).